The following is a 237-amino-acid chain: MNIKDVGVIISKKPLKENTFIITVCTKNHGLYSGVVKESSKKSKFIYQEGNIVDFLWQARLHEHIGIAKCELIKSYTGYLIINKTKLYAFNSIISLIKELCHEREKHSNFFSFLLNYLDNLSKNFCFRDYINFELTLLAKTGYKLDLTKCGVTHVTTDLTYVSPKSARALSYEVGKPYKDKLLILPKFLLSDDSEITLEEKRQALTLTNYFFNRYLFHNNRQPEARQTFVGYILNEG.

The protein belongs to the RecO family.

In terms of biological role, involved in DNA repair and RecF pathway recombination. This is DNA repair protein RecO from Rickettsia akari (strain Hartford).